The chain runs to 185 residues: Small ribosomal subunit protein uS5 (185 aa).

Residues 18–81 form the S5 DRBM domain; it reads FVDKLVHINR…ESAKRALIRV (64 aa). The segment at 157-185 is disordered; sequence SPRSVAARRGIKVSQLQSRRRVEDAEATD. Over residues 176-185 the composition is skewed to basic and acidic residues; it reads RRVEDAEATD.

It belongs to the universal ribosomal protein uS5 family. In terms of assembly, part of the 30S ribosomal subunit. Contacts proteins S4 and S8.

Functionally, with S4 and S12 plays an important role in translational accuracy. Its function is as follows. Located at the back of the 30S subunit body where it stabilizes the conformation of the head with respect to the body. This chain is Small ribosomal subunit protein uS5, found in Xanthobacter autotrophicus (strain ATCC BAA-1158 / Py2).